Reading from the N-terminus, the 104-residue chain is Thiosulfate sulfurtransferase PspE (104 aa).

The N-terminal stretch at 1-19 (MFKKGLLALALVFSLPVFA) is a signal peptide. Positions 20–104 (AEHWIDVRVP…KDIAMPKVKG (85 aa)) constitute a Rhodanese domain. Residue C67 is the Cysteine persulfide intermediate of the active site.

In terms of assembly, monomer.

Its subcellular location is the periplasm. The enzyme catalyses thiosulfate + hydrogen cyanide = thiocyanate + sulfite + 2 H(+). With respect to regulation, inhibited by thiosulfate above 100 mM, particularly at low cyanide concentrations (&lt;5 mM). Inhibited by sodium sulfate or sodium chloride at 0.25 M which gives around 50% inhibition of rhodanese activity. Addition of sodium phosphate at the same concentration results in about 65% inhibition. Sulfite strongly inhibits PspE activity (1 mM sodium sulfite resulted in more than 50% inhibition of rhodanese activity). The phage shock protein (psp) operon (pspABCDE) may play a significant role in the competition for survival under nutrient- or energy-limited conditions. PspE catalyzes the sulfur-transfer reaction from thiosulfate to cyanide, to form sulfite and thiocyanate. Also able to use dithiol (dithiothreitol) as an alternate sulfur acceptor. Also possesses a very low mercaptopyruvate sulfurtransferase activity. This Escherichia coli (strain K12) protein is Thiosulfate sulfurtransferase PspE (pspE).